Here is a 567-residue protein sequence, read N- to C-terminus: Probable transport protein (567 aa).

Basic and acidic residues predominate over residues 1-30 (MSDRVEVNERRSDSVSEKEPARDDARKDVT). The disordered stretch occupies residues 1–38 (MSDRVEVNERRSDSVSEKEPARDDARKDVTDDQEDAPP). Residues 1–46 (MSDRVEVNERRSDSVSEKEPARDDARKDVTDDQEDAPPFMTANNAR) lie on the Cytoplasmic side of the membrane. The helical transmembrane segment at 47–67 (VMLVQAIGGSLNGYSIGFVGV) threads the bilayer. The Extracellular portion of the chain corresponds to 68-160 (YSTLFGYSTN…PSGYSSSESG (93 aa)). Residues 161-181 (IFAGSMIAGCLIGSVFAGPLA) form a helical membrane-spanning segment. Residues 182–189 (SKIGARLS) are Cytoplasmic-facing. A helical membrane pass occupies residues 190–210 (FLLVGLVGVVASVMYHASCAA). The Extracellular segment spans residues 211–212 (DE). Residues 213 to 233 (FWVLIVGRFVIGLFLGVICVA) form a helical membrane-spanning segment. Residues 234–249 (CPVYTDQNAHPKWKRT) are Cytoplasmic-facing. A helical transmembrane segment spans residues 250–270 (IGVMFQVFTTLGIFVAALMGL). Residues 271–289 (ALGQSIRFDHDGDQKVMAR) lie on the Extracellular side of the membrane. A helical transmembrane segment spans residues 290-310 (MQGLCVFSTLFSLLTVVLGIV). Topologically, residues 311–341 (TRESRAKFDGGEEGRAELNPSEYGYVEMIPR) are cytoplasmic. Residues 342 to 362 (LLMGCVMAGTLQLTGINAVMN) traverse the membrane as a helical segment. At 363–366 (YAPT) the chain is on the extracellular side. Residues 367-387 (IMGSLGLAPLVGNFVVMLWNF) traverse the membrane as a helical segment. The Cytoplasmic portion of the chain corresponds to 388 to 404 (VTTLASIPLSYVFTMRH). A helical membrane pass occupies residues 405-425 (VFLFGSIFTSCMCLFMCGIPV). Topologically, residues 426–437 (YPGVSKKLEAKN) are extracellular. Residues 438 to 458 (GVAITGILLFILGFEVCVGPC) form a helical membrane-spanning segment. The Cytoplasmic segment spans residues 459 to 480 (YYVLTQDMFPPSFRPRGASFTQ). The chain crosses the membrane as a helical span at residues 481 to 501 (VAQFIFNLIINVCYPIATESI). The Extracellular portion of the chain corresponds to 502–514 (SGGPSGNQDKGQA). A helical transmembrane segment spans residues 515 to 535 (VAFIFFGGLGLICFVIQVFFL). Topologically, residues 536-567 (HPWDEERDGKKVVAPAIGKKELSEESIGNRAE) are cytoplasmic.

It belongs to the major facilitator superfamily. Sugar transporter (TC 2.A.1.1) family.

The protein localises to the membrane. Its function is as follows. Probable membrane transport protein. The chain is Probable transport protein (PRO-1) from Leishmania enriettii.